The primary structure comprises 341 residues: S-adenosylmethionine:tRNA ribosyltransferase-isomerase (341 aa).

The protein belongs to the QueA family. Monomer.

Its subcellular location is the cytoplasm. It carries out the reaction 7-aminomethyl-7-carbaguanosine(34) in tRNA + S-adenosyl-L-methionine = epoxyqueuosine(34) in tRNA + adenine + L-methionine + 2 H(+). The protein operates within tRNA modification; tRNA-queuosine biosynthesis. Functionally, transfers and isomerizes the ribose moiety from AdoMet to the 7-aminomethyl group of 7-deazaguanine (preQ1-tRNA) to give epoxyqueuosine (oQ-tRNA). The chain is S-adenosylmethionine:tRNA ribosyltransferase-isomerase from Symbiobacterium thermophilum (strain DSM 24528 / JCM 14929 / IAM 14863 / T).